The following is a 93-amino-acid chain: Pyrimidine/purine nucleoside phosphorylase (93 aa).

This sequence belongs to the nucleoside phosphorylase PpnP family.

It carries out the reaction a purine D-ribonucleoside + phosphate = a purine nucleobase + alpha-D-ribose 1-phosphate. It catalyses the reaction adenosine + phosphate = alpha-D-ribose 1-phosphate + adenine. The enzyme catalyses cytidine + phosphate = cytosine + alpha-D-ribose 1-phosphate. The catalysed reaction is guanosine + phosphate = alpha-D-ribose 1-phosphate + guanine. It carries out the reaction inosine + phosphate = alpha-D-ribose 1-phosphate + hypoxanthine. It catalyses the reaction thymidine + phosphate = 2-deoxy-alpha-D-ribose 1-phosphate + thymine. The enzyme catalyses uridine + phosphate = alpha-D-ribose 1-phosphate + uracil. The catalysed reaction is xanthosine + phosphate = alpha-D-ribose 1-phosphate + xanthine. Its function is as follows. Catalyzes the phosphorolysis of diverse nucleosides, yielding D-ribose 1-phosphate and the respective free bases. Can use uridine, adenosine, guanosine, cytidine, thymidine, inosine and xanthosine as substrates. Also catalyzes the reverse reactions. This chain is Pyrimidine/purine nucleoside phosphorylase, found in Marinobacter nauticus (strain ATCC 700491 / DSM 11845 / VT8) (Marinobacter aquaeolei).